The following is a 415-amino-acid chain: Adipocyte plasma membrane-associated protein (415 aa).

Topologically, residues 1 to 39 (MNEPEGLRFRRLNRPHIITDETHEPQYKATSTYSGKVFR) are cytoplasmic. The chain crosses the membrane as a helical span at residues 40-60 (VTLLTMVAFLLLPLLVVVFVL). The Extracellular portion of the chain corresponds to 61–412 (ESPIQPEVFS…RSPYLCKLDL (352 aa)). N-linked (GlcNAc...) asparagine glycosylation is present at Asn-159.

The protein belongs to the strictosidine synthase family.

The protein localises to the membrane. The sequence is that of Adipocyte plasma membrane-associated protein (apmap) from Danio rerio (Zebrafish).